The following is a 574-amino-acid chain: MAYRMDRQAYAETYGPTTGDRMRLADTELILEVERDFTTYGEEVKFGGGKVIRDGMGQSQQSRANGAVDTVITNALILDWWGIVKADIGLRDGRIVAIGKAGNPDITDGIDIVIGPGTEAIAGEGHIVTAGAIDSHIHFICPQQIETALASGVTTMLGGGTGPATGTNATTCTPGSFHISRMLQAAEGLPMNLGFFGKGNASTTEALEEQVLAGACGLKLHEDWGTTPAAIDCCLSVADRFDVQVCIHTDTLNEAGFVEDTIRAIGGRTIHTFHTEGAGGGHAPDIIRICGESNVLPSSTNPTRPYTRNTLEEHLDMLMVCHHLDPAIPEDVAFAESRIRRETIAAEDILHDLGAFSIIASDSQAMGRVGEVITRTFQTAHKMKVQRGPLPEDAANPRGTRNDNNRLKRYIAKVTINPAIAHGIDNHVGSVEVGKLADLVLWKPGFFGVRPELVIKGGSIIWAQMGDANASIPTPGPVHGRPMFAAFGKALAPSCLTFLSQAAIETDLPNKLGLQRACIPVLNTRTIGKAEMHNNNSLPKVEVDPQTYEVFADGELLTCDPAEELPMAQRYLLI.

Residues 131-574 (GAIDSHIHFI…LPMAQRYLLI (444 aa)) enclose the Urease domain. 3 residues coordinate Ni(2+): His136, His138, and Lys219. Position 219 is an N6-carboxylysine (Lys219). Substrate is bound at residue His221. Residues His248 and His274 each contribute to the Ni(2+) site. The active-site Proton donor is the His322. Asp362 serves as a coordination point for Ni(2+).

The protein belongs to the metallo-dependent hydrolases superfamily. Urease alpha subunit family. In terms of assembly, heterotrimer of UreA (gamma), UreB (beta) and UreC (alpha) subunits. Three heterotrimers associate to form the active enzyme. The cofactor is Ni cation. In terms of processing, carboxylation allows a single lysine to coordinate two nickel ions.

Its subcellular location is the cytoplasm. It catalyses the reaction urea + 2 H2O + H(+) = hydrogencarbonate + 2 NH4(+). It functions in the pathway nitrogen metabolism; urea degradation; CO(2) and NH(3) from urea (urease route): step 1/1. This chain is Urease subunit alpha, found in Prochlorococcus marinus (strain MIT 9303).